Reading from the N-terminus, the 954-residue chain is Glycine dehydrogenase (decarboxylating) (954 aa).

N6-(pyridoxal phosphate)lysine is present on lysine 704.

Belongs to the GcvP family. The glycine cleavage system is composed of four proteins: P, T, L and H. The cofactor is pyridoxal 5'-phosphate.

It carries out the reaction N(6)-[(R)-lipoyl]-L-lysyl-[glycine-cleavage complex H protein] + glycine + H(+) = N(6)-[(R)-S(8)-aminomethyldihydrolipoyl]-L-lysyl-[glycine-cleavage complex H protein] + CO2. In terms of biological role, the glycine cleavage system catalyzes the degradation of glycine. The P protein binds the alpha-amino group of glycine through its pyridoxal phosphate cofactor; CO(2) is released and the remaining methylamine moiety is then transferred to the lipoamide cofactor of the H protein. The polypeptide is Glycine dehydrogenase (decarboxylating) (Vibrio vulnificus (strain CMCP6)).